Reading from the N-terminus, the 115-residue chain is Large ribosomal subunit protein bL19 (115 aa).

The protein belongs to the bacterial ribosomal protein bL19 family.

This protein is located at the 30S-50S ribosomal subunit interface and may play a role in the structure and function of the aminoacyl-tRNA binding site. The polypeptide is Large ribosomal subunit protein bL19 (Nitrosococcus oceani (strain ATCC 19707 / BCRC 17464 / JCM 30415 / NCIMB 11848 / C-107)).